A 502-amino-acid polypeptide reads, in one-letter code: Ubiquilin (502 aa).

The Ubiquitin-like domain maps to 8 to 83; the sequence is IKVHVKSPSN…VHLVIRNQAR (76 aa). Residues 84-115 are compositionally biased toward low complexity; that stretch reads PTPAPAAATPTASSAPSSNPTPSSQPNPTNNP. The disordered stretch occupies residues 84 to 136; sequence PTPAPAAATPTASSAPSSNPTPSSQPNPTNNPFAAMGGMGSPADILNNPDAMR. STI1 domains are found at residues 124–157 and 161–200; these read SPAD…MRTI and NPQF…FQEM. Polar residues predominate over residues 235–251; sequence SATNSLSGNPFASLRGD. Residues 235–294 are disordered; that stretch reads SATNSLSGNPFASLRGDQSSEPRVDRAGQENNEALPNPWASNANQATNNQSNNRSADFNS. Residues 252–262 are compositionally biased toward basic and acidic residues; it reads QSSEPRVDRAG. Positions 274–290 are enriched in low complexity; it reads ASNANQATNNQSNNRSA. STI1 domains lie at 289-327 and 351-387; these read SADF…INSI and NPQI…SEAF. One can recognise a UBA domain in the interval 455 to 501; that stretch reads PVNPEQTYASQLEQLQSMGFSDRARNVAALTATFGDLNAAVERLLNS.

Expressed in the pharynx, hypodermis, intestine and head neurons. Upon ER stress, expressed predominantly in pharyngeal muscle, hypodermis and intestine.

Its function is as follows. May play a role in the ER-associated protein degradation pathway (ERAD) possibly via its interaction with ER-localized proteins ubxn-4 and cdc-48.1 and/or cdc48.2, providing a link between the polyubiquitinated ERAD substrates and the proteasome. Also plays an important role in the regulation of other protein degradation mechanisms and pathways including ubiquitin-proteasome system (UPS) and autophagy. Mediates the proteasomal targeting of misfolded or accumulated proteins for degradation by binding (via UBA domain) to their polyubiquitin chains and by interacting (via ubiquitin-like domain) with the subunits of the proteasome. Collaborates with POST (F36D4.5) in the export of ubiquitinated proteins from the nucleus to the cytoplasm. Also acts as a regulator of DNA repair by inhibiting homologous recombination repair, thereby redirecting double-strand break repair toward non-homologous end joining (NHEJ). This is Ubiquilin from Caenorhabditis elegans.